A 380-amino-acid chain; its full sequence is F-box protein At4g18380 (380 aa).

An F-box domain is found at 22–70; it reads IDHFDNLPDSILLLIFNNIGDVKALGRCSVVSKRFHSLIPQVENVFVRV.

The chain is F-box protein At4g18380 from Arabidopsis thaliana (Mouse-ear cress).